The following is a 159-amino-acid chain: Cytochrome c-type biogenesis protein CcmE (159 aa).

Residues 1-8 (MHPIRKKR) are Cytoplasmic-facing. A helical; Signal-anchor for type II membrane protein membrane pass occupies residues 9–29 (LTIVLFLVAGIAIAVGLTTYA). At 30 to 159 (LRQNINLFYD…VEKAAETTAY (130 aa)) the chain is on the periplasmic side. Residues His124 and Tyr128 each contribute to the heme site. The tract at residues 135-159 (EALERSSKGQHKSADVEKAAETTAY) is disordered. Residues 136–159 (ALERSSKGQHKSADVEKAAETTAY) are compositionally biased toward basic and acidic residues.

The protein belongs to the CcmE/CycJ family.

Its subcellular location is the cell inner membrane. Heme chaperone required for the biogenesis of c-type cytochromes. Transiently binds heme delivered by CcmC and transfers the heme to apo-cytochromes in a process facilitated by CcmF and CcmH. In Marinobacter nauticus (strain ATCC 700491 / DSM 11845 / VT8) (Marinobacter aquaeolei), this protein is Cytochrome c-type biogenesis protein CcmE.